Reading from the N-terminus, the 178-residue chain is Large ribosomal subunit protein bL25 (178 aa).

Belongs to the bacterial ribosomal protein bL25 family. CTC subfamily. Part of the 50S ribosomal subunit; part of the 5S rRNA/L5/L18/L25 subcomplex. Contacts the 5S rRNA. Binds to the 5S rRNA independently of L5 and L18.

Functionally, this is one of the proteins that binds to the 5S RNA in the ribosome where it forms part of the central protuberance. The protein is Large ribosomal subunit protein bL25 of Campylobacter lari (strain RM2100 / D67 / ATCC BAA-1060).